A 3414-amino-acid polypeptide reads, in one-letter code: Genome polyprotein (3414 aa).

Positions 1–30 (MVKKAILKGKGGGPPRRVSKETATKTRQPR) are disordered. Residues 2-98 (VKKAILKGKG…LQKRGKRRSA (97 aa)) lie on the Cytoplasmic side of the membrane. The propeptide at 97-117 (SATDWMSWLLVITLLGMTLAA) is ER anchor for the capsid protein C, removed in mature form by serine protease NS3. Residues 99–119 (TDWMSWLLVITLLGMTLAATV) form a helical membrane-spanning segment. Residues 120–242 (RKERDGSTVI…HLTRVEGWVW (123 aa)) lie on the Extracellular side of the membrane. Asn144 carries an N-linked (GlcNAc...) asparagine; by host glycan. Residues 243–260 (KNKLLALAMVTVVWLTLE) traverse the membrane as a helical segment. Position 261 (Ser261) is a topological domain, cytoplasmic. A helical membrane pass occupies residues 262 to 280 (VVTRVAVLVVLLCLAPVYA). Over 281 to 727 (SRCTHLENRD…HTVLGGAFNS (447 aa)) the chain is Extracellular. 6 cysteine pairs are disulfide-bonded: Cys283–Cys310, Cys340–Cys396, Cys340–Cys401, Cys354–Cys385, Cys372–Cys396, and Cys372–Cys401. Positions 378 to 391 (DRGWGNHCGLFGKG) are fusion peptide. N-linked (GlcNAc...) asparagine; by host glycosylation is present at Asn434. 2 disulfide bridges follow: Cys466/Cys570 and Cys587/Cys618. Residues 728-748 (IFGGVGFLPKLLLGVALAWLG) form a helical membrane-spanning segment. The Extracellular portion of the chain corresponds to 749-755 (LNMRNPT). The chain crosses the membrane as a helical span at residues 756 to 776 (MSMSFLLAGGLVLAMTLGVGA). At 777–1132 (DVGCAVDTER…RSMVVADNGE (356 aa)) the chain is on the extracellular side. 6 disulfides stabilise this stretch: Cys780/Cys791, Cys831/Cys920, Cys955/Cys1000, Cys1057/Cys1106, Cys1068/Cys1090, and Cys1089/Cys1093. N-linked (GlcNAc...) asparagine; by host glycosylation is found at Asn861, Asn983, and Asn999. A helical membrane pass occupies residues 1133 to 1153 (LLSEGGVPGIVALFVVLEYII). Residues 1154–1158 (RRRPS) are Cytoplasmic-facing. Residues 1159–1179 (TGTTVVWGGIVVLALLVTGMV) traverse the membrane as a helical segment. The Lumenal segment spans residues 1180–1187 (RIESLVRY). Residues 1188 to 1208 (VVAVGITFHLELGPEIVALML) traverse the membrane as a helical segment. The Cytoplasmic segment spans residues 1209-1293 (LQAVFELRVG…LLMALMTQQD (85 aa)). Residues 1294–1314 (VVTVHHGLVCFLSVASACSVW) form a helical membrane-spanning segment. Topologically, residues 1315-1327 (RLLKGHREQKGLT) are lumenal. A helical membrane pass occupies residues 1328–1348 (WVVPLAGLLGGEGSGIRLLAF). Over 1349-1359 (WELSAHRGRRS) the chain is Cytoplasmic. Residues 1360–1378 (FSEPLTVVGVMLTLASGMM) traverse the membrane as a helical segment. The Lumenal segment spans residues 1379–1382 (RHTS). A helical membrane pass occupies residues 1383-1403 (QEALCALAVASFLLLMLVLGT). Topologically, residues 1404 to 1454 (RKMQLVAEWSGCVEWYPELVNEGGEVSLRVRQDAMGNFHLTELEKEERMMA) are cytoplasmic. The interacts with and activates NS3 protease stretch occupies residues 1410 to 1449 (AEWSGCVEWYPELVNEGGEVSLRVRQDAMGNFHLTELEKE). Positions 1455 to 1475 (FWLIAGLAASAIHWSGILGVM) form an intramembrane region, helical. The Cytoplasmic portion of the chain corresponds to 1476–2160 (GLWTLTEMLR…RMAERDAPEA (685 aa)). In terms of domain architecture, Peptidase S7 spans 1490 to 1669 (SDLVFSGQGG…EAEKSRPNLP (180 aa)). Catalysis depends on charge relay system; for serine protease NS3 activity residues His1543, Asp1567, and Ser1627. The region spanning 1675-1831 (TGWTSKGQIT…ESNGAITSEE (157 aa)) is the Helicase ATP-binding domain. Residue 1688–1695 (MHPGSGKT) participates in ATP binding. The DEAH box motif lies at 1779–1782 (DEAH). Residues 1841 to 2000 (DGFDWITEYE…TLRGPVATFY (160 aa)) enclose the Helicase C-terminal domain. Position 1883 is an N6-acetyllysine; by host (Lys1883). The chain crosses the membrane as a helical span at residues 2161 to 2181 (FLTMVEMMVLGLATLGVIWCF). The Lumenal segment spans residues 2182-2189 (VVRTSISR). The segment at residues 2190–2210 (MMLGTLVLLASLLLLWAGGVG) is an intramembrane region (helical). A topological domain (lumenal) is located at residue Tyr2211. The helical transmembrane segment at 2212 to 2232 (GNMAGVALIFYTLLTVLQPEA) threads the bilayer. The Cytoplasmic portion of the chain corresponds to 2233–2244 (GKQRSSDDNKLA). The chain crosses the membrane as a helical span at residues 2245 to 2265 (YFLLTLCSLAGLVAANEMGFL). Topologically, residues 2266–2299 (EKTKADLSTALWSEREEPRPWSEWTNVDIQPARS) are lumenal. An intramembrane region (helical) is located at residues 2300–2320 (WGTYVLVVSLFTPYIIHQLQT). The Lumenal segment spans residues 2321–2343 (KIQQLVNSAVASGAQAMRDLGGG). The helical intramembrane region spans 2344–2364 (APFFGVAGHVMTLGVVSLIGA). Over 2365 to 2368 (TPTS) the chain is Lumenal. Residues 2369–2389 (LMVGVGLAALHLAIVVSGLEA) form a helical membrane-spanning segment. Topologically, residues 2390–2432 (ELTQRAHKVFFSAMVRNPMVDGDVINPFGEGEAKPALYERKMS) are cytoplasmic. Residues 2433-2453 (LVLATVLCLMSVVMNRTVASI) form a helical membrane-spanning segment. The Lumenal portion of the chain corresponds to 2454-2477 (TEASAVGLAAAGQLLRPEADTLWT). A helical transmembrane segment spans residues 2478–2498 (MPVACGMSGVVRGSLWGFLPL). The Cytoplasmic portion of the chain corresponds to 2499–3414 (GHRLWLRASG…WELRLESSII (916 aa)). The mRNA cap 0-1 NS5-type MT domain occupies 2512–2776 (GGSEGDTLGD…ELDLGVGTRC (265 aa)). Position 2567 (Ser2567) interacts with S-adenosyl-L-methionine. A Phosphoserine modification is found at Ser2567. Catalysis depends on Lys2572, which acts as the For 2'-O-MTase activity. The S-adenosyl-L-methionine site is built by Gly2597, Trp2598, Thr2615, Ile2616, Asp2642, and Val2643. The active-site For 2'-O-MTase activity is Asp2657. Residue Ile2658 coordinates S-adenosyl-L-methionine. Active-site for 2'-O-MTase activity residues include Lys2694 and Glu2730. Residues 2730 to 2734 (EMYYS) are interaction with host SCRIB. Tyr2732 contacts S-adenosyl-L-methionine. The Zn(2+) site is built by Glu2950, His2954, Cys2959, and Cys2962. The RdRp catalytic domain occupies 3040–3189 (GLFYADDTAG…RPLDDRFGKA (150 aa)). Zn(2+) contacts are provided by His3224, Cys3240, and Cys3359.

In the N-terminal section; belongs to the class I-like SAM-binding methyltransferase superfamily. mRNA cap 0-1 NS5-type methyltransferase family. In terms of assembly, homodimer. Interacts (via N-terminus) with host EXOC1 (via C-terminus); this interaction results in EXOC1 degradation through the proteasome degradation pathway. Forms heterodimers with envelope protein E in the endoplasmic reticulum and Golgi. As to quaternary structure, homodimer; in the endoplasmic reticulum and Golgi. Interacts with protein prM. Interacts with non-structural protein 1. In terms of assembly, homodimer; Homohexamer when secreted. Interacts with envelope protein E. Interacts (via N-terminus) with serine protease NS3. As to quaternary structure, forms a heterodimer with serine protease NS3. May form homooligomers. In terms of assembly, forms a heterodimer with NS2B. Interacts with NS4B. Interacts with unphosphorylated RNA-directed RNA polymerase NS5; this interaction stimulates RNA-directed RNA polymerase NS5 guanylyltransferase activity. Interacts with serine protease NS3. Interacts with NS1. As to quaternary structure, homodimer. Interacts with host STAT2; this interaction inhibits the phosphorylation of the latter, and, when all viral proteins are present (polyprotein), targets STAT2 for degradation. Interacts with serine protease NS3. Interacts with host SCRIB; this interaction targets NS5 to the cell membrane periphery and nucleus, thereby allowing efficient host nuclear STAT1 inhibition. Specific enzymatic cleavages in vivo yield mature proteins. Cleavages in the lumen of endoplasmic reticulum are performed by host signal peptidase, whereas cleavages in the cytoplasmic side are performed by serine protease NS3. Signal cleavage at the 2K-4B site requires a prior NS3 protease-mediated cleavage at the 4A-2K site. In terms of processing, cleaved in post-Golgi vesicles by a host furin, releasing the mature small envelope protein M, and peptide pr. This cleavage is incomplete as up to 30% of viral particles still carry uncleaved prM. Post-translationally, N-glycosylated. N-glycosylated. The excreted form is glycosylated and this is required for efficient secretion of the protein from infected cells. In terms of processing, acetylated by host KAT5. Acetylation modulates NS3 RNA-binding and unwinding activities and plays an important positive role for viral replication. Post-translationally, phosphorylated on serines residues. This phosphorylation may trigger NS5 nuclear localization.

It is found in the virion. The protein resides in the host nucleus. Its subcellular location is the host cytoplasm. It localises to the host perinuclear region. The protein localises to the secreted. It is found in the virion membrane. The protein resides in the host endoplasmic reticulum membrane. It carries out the reaction Selective hydrolysis of -Xaa-Xaa-|-Yaa- bonds in which each of the Xaa can be either Arg or Lys and Yaa can be either Ser or Ala.. It catalyses the reaction RNA(n) + a ribonucleoside 5'-triphosphate = RNA(n+1) + diphosphate. The catalysed reaction is a ribonucleoside 5'-triphosphate + H2O = a ribonucleoside 5'-diphosphate + phosphate + H(+). The enzyme catalyses ATP + H2O = ADP + phosphate + H(+). It carries out the reaction a 5'-end (5'-triphosphoguanosine)-ribonucleoside in mRNA + S-adenosyl-L-methionine = a 5'-end (N(7)-methyl 5'-triphosphoguanosine)-ribonucleoside in mRNA + S-adenosyl-L-homocysteine. It catalyses the reaction a 5'-end (N(7)-methyl 5'-triphosphoguanosine)-ribonucleoside in mRNA + S-adenosyl-L-methionine = a 5'-end (N(7)-methyl 5'-triphosphoguanosine)-(2'-O-methyl-ribonucleoside) in mRNA + S-adenosyl-L-homocysteine + H(+). In terms of biological role, plays a role in virus budding by binding to the cell membrane and gathering the viral RNA into a nucleocapsid that forms the core of a mature virus particle. During virus entry, may induce genome penetration into the host cytoplasm after hemifusion induced by the surface proteins. Can migrate to the cell nucleus where it modulates host functions. Functionally, inhibits RNA silencing by interfering with host Dicer. Prevents premature fusion activity of envelope proteins in trans-Golgi by binding to envelope protein E at pH6.0. After virion release in extracellular space, gets dissociated from E dimers. Its function is as follows. Acts as a chaperone for envelope protein E during intracellular virion assembly by masking and inactivating envelope protein E fusion peptide. prM is the only viral peptide matured by host furin in the trans-Golgi network probably to avoid catastrophic activation of the viral fusion activity in acidic Golgi compartment prior to virion release. prM-E cleavage is inefficient, and many virions are only partially matured. These uncleaved prM would play a role in immune evasion. In terms of biological role, may play a role in virus budding. Exerts cytotoxic effects by activating a mitochondrial apoptotic pathway through M ectodomain. May display a viroporin activity. Functionally, binds to host cell surface receptor and mediates fusion between viral and cellular membranes. Envelope protein is synthesized in the endoplasmic reticulum in the form of heterodimer with protein prM. They play a role in virion budding in the ER, and the newly formed immature particle is covered with 60 spikes composed of heterodimer between precursor prM and envelope protein E. The virion is transported to the Golgi apparatus where the low pH causes dissociation of PrM-E heterodimers and formation of E homodimers. prM-E cleavage is inefficient, and many virions are only partially matured. These uncleaved prM would play a role in immune evasion. Involved in immune evasion, pathogenesis and viral replication. Once cleaved off the polyprotein, is targeted to three destinations: the viral replication cycle, the plasma membrane and the extracellular compartment. Essential for viral replication. Required for formation of the replication complex and recruitment of other non-structural proteins to the ER-derived membrane structures. Excreted as a hexameric lipoparticle that plays a role against host immune response. Antagonizing the complement function. Binds to the host macrophages and dendritic cells. Inhibits signal transduction originating from Toll-like receptor 3 (TLR3). Its function is as follows. Component of the viral RNA replication complex that functions in virion assembly and antagonizes the host immune response. In terms of biological role, required cofactor for the serine protease function of NS3. May have membrane-destabilizing activity and form viroporins. Functionally, displays three enzymatic activities: serine protease, NTPase and RNA helicase. NS3 serine protease, in association with NS2B, performs its autocleavage and cleaves the polyprotein at dibasic sites in the cytoplasm: C-prM, NS2A-NS2B, NS2B-NS3, NS3-NS4A, NS4A-2K and NS4B-NS5. NS3 RNA helicase binds RNA and unwinds dsRNA in the 3' to 5' direction. Regulates the ATPase activity of the NS3 helicase activity. NS4A allows NS3 helicase to conserve energy during unwinding. Its function is as follows. Functions as a signal peptide for NS4B and is required for the interferon antagonism activity of the latter. In terms of biological role, induces the formation of ER-derived membrane vesicles where the viral replication takes place. Inhibits interferon (IFN)-induced host STAT1 phosphorylation and nuclear translocation, thereby preventing the establishment of cellular antiviral state by blocking the IFN-alpha/beta pathway. Inhibits STAT2 translocation in the nucleus after IFN-alpha treatment. Functionally, replicates the viral (+) and (-) genome, and performs the capping of genomes in the cytoplasm. NS5 methylates viral RNA cap at guanine N-7 and ribose 2'-O positions. Besides its role in RNA genome replication, also prevents the establishment of cellular antiviral state by blocking the interferon-alpha/beta (IFN-alpha/beta) signaling pathway. Inhibits host TYK2 and STAT2 phosphorylation, thereby preventing activation of JAK-STAT signaling pathway. This is Genome polyprotein from Tick-borne encephalitis virus European subtype (strain Neudoerfl) (NEUV).